The following is a 340-amino-acid chain: DNA-directed RNA polymerase subunit alpha (340 aa).

Residues 1-236 (MLSLSKNWNT…EQLQLFISFE (236 aa)) form an alpha N-terminal domain (alpha-NTD) region. The tract at residues 251-340 (FAPYLLKRVD…LSKRYEDSYN (90 aa)) is alpha C-terminal domain (alpha-CTD).

It belongs to the RNA polymerase alpha chain family. As to quaternary structure, homodimer. The RNAP catalytic core consists of 2 alpha, 1 beta, 1 beta' and 1 omega subunit. When a sigma factor is associated with the core the holoenzyme is formed, which can initiate transcription.

It carries out the reaction RNA(n) + a ribonucleoside 5'-triphosphate = RNA(n+1) + diphosphate. Its function is as follows. DNA-dependent RNA polymerase catalyzes the transcription of DNA into RNA using the four ribonucleoside triphosphates as substrates. This is DNA-directed RNA polymerase subunit alpha from Rickettsia peacockii (strain Rustic).